A 557-amino-acid polypeptide reads, in one-letter code: Dihydroxy-acid dehydratase (557 aa).

Mg(2+) is bound at residue D78. C119 is a [2Fe-2S] cluster binding site. Positions 120 and 121 each coordinate Mg(2+). K121 is subject to N6-carboxylysine. Residue C191 coordinates [2Fe-2S] cluster. E442 is a binding site for Mg(2+). S468 acts as the Proton acceptor in catalysis.

It belongs to the IlvD/Edd family. As to quaternary structure, homodimer. It depends on [2Fe-2S] cluster as a cofactor. Mg(2+) serves as cofactor.

It catalyses the reaction (2R)-2,3-dihydroxy-3-methylbutanoate = 3-methyl-2-oxobutanoate + H2O. The enzyme catalyses (2R,3R)-2,3-dihydroxy-3-methylpentanoate = (S)-3-methyl-2-oxopentanoate + H2O. Its pathway is amino-acid biosynthesis; L-isoleucine biosynthesis; L-isoleucine from 2-oxobutanoate: step 3/4. The protein operates within amino-acid biosynthesis; L-valine biosynthesis; L-valine from pyruvate: step 3/4. Functionally, functions in the biosynthesis of branched-chain amino acids. Catalyzes the dehydration of (2R,3R)-2,3-dihydroxy-3-methylpentanoate (2,3-dihydroxy-3-methylvalerate) into 2-oxo-3-methylpentanoate (2-oxo-3-methylvalerate) and of (2R)-2,3-dihydroxy-3-methylbutanoate (2,3-dihydroxyisovalerate) into 2-oxo-3-methylbutanoate (2-oxoisovalerate), the penultimate precursor to L-isoleucine and L-valine, respectively. This is Dihydroxy-acid dehydratase from Syntrophobacter fumaroxidans (strain DSM 10017 / MPOB).